The chain runs to 406 residues: Argininosuccinate synthase (406 aa).

ATP contacts are provided by residues 11-19 (AYSGGLDTS) and A38. L-citrulline-binding residues include Y91 and S96. Residue G121 participates in ATP binding. L-aspartate-binding residues include T123, N127, and D128. An L-citrulline-binding site is contributed by N127. R131, S181, S190, E266, and Y278 together coordinate L-citrulline.

Belongs to the argininosuccinate synthase family. Type 1 subfamily. In terms of assembly, homotetramer.

It localises to the cytoplasm. It carries out the reaction L-citrulline + L-aspartate + ATP = 2-(N(omega)-L-arginino)succinate + AMP + diphosphate + H(+). Its pathway is amino-acid biosynthesis; L-arginine biosynthesis; L-arginine from L-ornithine and carbamoyl phosphate: step 2/3. This Campylobacter curvus (strain 525.92) protein is Argininosuccinate synthase.